The following is a 157-amino-acid chain: MNKKETRHRLIRSLISETTIHTQQELQERLQKNGITITQATLSRDMKELNLVKVTSGNDTHYEALAISQTRWEHRLRFYMEDALVMLKIVQHQIILKTLPGLAQSFGSILDAMQIPEIVATVCGDDTCLIVCEDNEQAKACYETLSHYTPPFFFSNK.

It belongs to the ArgR family.

The protein resides in the cytoplasm. The protein operates within amino-acid degradation; L-arginine degradation via ADI pathway. In terms of biological role, regulates the transcription of the arc operon, involved in arginine catabolism. The protein is Arginine regulator (argR1) of Streptococcus pyogenes serotype M3 (strain SSI-1).